A 433-amino-acid chain; its full sequence is MTDLTPREIVSELDRFIIGQKDAKRAVAVALRNRWRRKQLSDDIRDEVYPKNILMIGPTGVGKTEISRRLARLAKAPFLKVEATKFTEVGYVGRDVDSIIRDLVDAAIVETRARMREDVKSRAVKAAEDRVIEAIAGRDAREQTREMFRGKLKRGELDATVIEVEVADTSNPMQMLDPTGQGQMGMMNLGEIFGKAFGGRTTRRKMTVAESHDILMNEEADKLLDDEVVKATALEAVQENGIVFIDEIDKVCARSDMRGADVSREGVQRDLLPLIEGTTVSTKYGPVKTDHILFIASGAFHIAKPSDLLPELQGRLPIRVELRALTEEDFVRILSETDNALTRQYKALMKTEKVGITFTEEGIKALASIAAEVNRSVENIGARRLYTVMERVFEELSFHAPDRSGEEVTVDAAYVEKNLGELARSTDLSRYVL.

Residues I18, 60–65 (GVGKTE), D246, E311, and R383 contribute to the ATP site.

It belongs to the ClpX chaperone family. HslU subfamily. In terms of assembly, a double ring-shaped homohexamer of HslV is capped on each side by a ring-shaped HslU homohexamer. The assembly of the HslU/HslV complex is dependent on binding of ATP.

It is found in the cytoplasm. ATPase subunit of a proteasome-like degradation complex; this subunit has chaperone activity. The binding of ATP and its subsequent hydrolysis by HslU are essential for unfolding of protein substrates subsequently hydrolyzed by HslV. HslU recognizes the N-terminal part of its protein substrates and unfolds these before they are guided to HslV for hydrolysis. The sequence is that of ATP-dependent protease ATPase subunit HslU from Cereibacter sphaeroides (strain ATCC 17025 / ATH 2.4.3) (Rhodobacter sphaeroides).